The sequence spans 70 residues: Putative membrane protein insertion efficiency factor (70 aa).

The protein belongs to the UPF0161 family.

The protein localises to the cell membrane. Could be involved in insertion of integral membrane proteins into the membrane. The polypeptide is Putative membrane protein insertion efficiency factor (Rubrobacter xylanophilus (strain DSM 9941 / JCM 11954 / NBRC 16129 / PRD-1)).